The following is an 86-amino-acid chain: Large ribosomal subunit protein uL23 (86 aa).

Belongs to the universal ribosomal protein uL23 family. Part of the 50S ribosomal subunit. Contacts protein L29.

Its function is as follows. Binds to 23S rRNA. One of the proteins that surrounds the polypeptide exit tunnel on the outside of the ribosome. The protein is Large ribosomal subunit protein uL23 of Thermococcus gammatolerans (strain DSM 15229 / JCM 11827 / EJ3).